Reading from the N-terminus, the 197-residue chain is ATP-dependent Clp protease proteolytic subunit 1 (197 aa).

Ser-96 (nucleophile) is an active-site residue. Residue His-121 is part of the active site.

The protein belongs to the peptidase S14 family. Fourteen ClpP subunits assemble into 2 heptameric rings which stack back to back to give a disk-like structure with a central cavity, resembling the structure of eukaryotic proteasomes.

It is found in the cytoplasm. The catalysed reaction is Hydrolysis of proteins to small peptides in the presence of ATP and magnesium. alpha-casein is the usual test substrate. In the absence of ATP, only oligopeptides shorter than five residues are hydrolyzed (such as succinyl-Leu-Tyr-|-NHMec, and Leu-Tyr-Leu-|-Tyr-Trp, in which cleavage of the -Tyr-|-Leu- and -Tyr-|-Trp bonds also occurs).. Its function is as follows. Cleaves peptides in various proteins in a process that requires ATP hydrolysis. Has a chymotrypsin-like activity. Plays a major role in the degradation of misfolded proteins. This chain is ATP-dependent Clp protease proteolytic subunit 1, found in Synechococcus sp. (strain ATCC 27144 / PCC 6301 / SAUG 1402/1) (Anacystis nidulans).